A 49-amino-acid polypeptide reads, in one-letter code: Large ribosomal subunit protein bL32 (49 aa).

Residues 25–49 are disordered; sequence AKPVKDKDGTYKLPHHINPTTGEYK.

It belongs to the bacterial ribosomal protein bL32 family.

This is Large ribosomal subunit protein bL32 from Sulfurimonas denitrificans (strain ATCC 33889 / DSM 1251) (Thiomicrospira denitrificans (strain ATCC 33889 / DSM 1251)).